A 312-amino-acid chain; its full sequence is Carbamate kinase 2 (312 aa).

Belongs to the carbamate kinase family.

The protein resides in the cytoplasm. The enzyme catalyses hydrogencarbonate + NH4(+) + ATP = carbamoyl phosphate + ADP + H2O + H(+). It participates in metabolic intermediate metabolism; carbamoyl phosphate degradation; CO(2) and NH(3) from carbamoyl phosphate: step 1/1. In Enterococcus faecalis (strain ATCC 700802 / V583), this protein is Carbamate kinase 2 (arcC2).